The primary structure comprises 71 residues: Conotoxin AbVIG (71 aa).

The N-terminal stretch at 1–17 (VLIIAVLFLTACQLTTA) is a signal peptide. A propeptide spanning residues 18–40 (ETSSRGKQKHRALRSTDKNSRMT) is cleaved from the precursor. 3 disulfides stabilise this stretch: cysteine 43–cysteine 57, cysteine 50–cysteine 61, and cysteine 56–cysteine 68.

The protein belongs to the conotoxin O1 superfamily. Expressed by the venom duct.

It localises to the secreted. This chain is Conotoxin AbVIG, found in Conus abbreviatus (Abbreviated cone).